The following is a 496-amino-acid chain: Probable ATP-dependent DNA helicase RecS (496 aa).

The Helicase ATP-binding domain maps to 25 to 192; the sequence is IESILSGKDT…MNLLELQHAV (168 aa). 38-45 lines the ATP pocket; the sequence is LPTGGGKS. The short motif at 136 to 139 is the DEAH box element; the sequence is DEAH. Residues 219–363 enclose the Helicase C-terminal domain; that stretch reads RVIQLVENLQ…EIADVIRVLE (145 aa).

This sequence belongs to the helicase family. RecQ subfamily. Interacts with SSB (ssbA) and YpbB.

The protein resides in the cytoplasm. It localises to the nucleoid. The catalysed reaction is Couples ATP hydrolysis with the unwinding of duplex DNA by translocating in the 3'-5' direction.. It carries out the reaction ATP + H2O = ADP + phosphate + H(+). In terms of biological role, probable 3'-5' DNA helicase. Required in synaptic and/or post-synaptic stages of recombination. Probably has an overlapping function with RecQ. It probably acts to help generate ss-DNA from ds-DNA breaks. The chain is Probable ATP-dependent DNA helicase RecS from Bacillus subtilis (strain 168).